Here is a 341-residue protein sequence, read N- to C-terminus: Heat-shock protein cognate (HSC) co-chaperone sgt12 (341 aa).

The interval 86–123 is disordered; that stretch reads PSKEPASAGAQAQSTEAQQPKAGAPTPESDKLKSEGNA. 3 TPR repeats span residues 114–147, 148–181, and 182–215; these read SDKL…APAN, PIYL…DPKY, and SKAW…EGNG. Positions 232 to 280 are disordered; sequence EEANRGAEPPADDVDDAAGASRGAGGMPDLSSLASMLGGRGGGGGGMPD. Over residues 269–278 the composition is skewed to gly residues; sequence GGRGGGGGGM.

The protein belongs to the SGT family. In terms of assembly, forms homodimers. Component of the get4/get5/sgt2 sorting complex. Dimers of sgt2 bind directly a single get5. Binds HSC family members ssa1, sse1, hsp104 and hsc82 via its TPR domain.

It localises to the cytoplasm. Heat-shock protein cognate (HSC) co-chaperone that preferentially binds endoplasmic reticulum-destined tail-anchored (TA) proteins and directs them to the GET (guided entry of TA proteins) pathway via get4 and get5. Get4 and get5 form an obligate complex that catalyzes the transfer of tail-anchored proteins destined to the endoplasmic reticulum from sgt2 to the cytosolic targeting factor which then targets the TA protein to the ER membrane via get1/get2. The chain is Heat-shock protein cognate (HSC) co-chaperone sgt12 from Aspergillus fumigatus (strain ATCC MYA-4609 / CBS 101355 / FGSC A1100 / Af293) (Neosartorya fumigata).